The chain runs to 305 residues: UDP-3-O-acyl-N-acetylglucosamine deacetylase (305 aa).

3 residues coordinate Zn(2+): His79, His238, and Asp242. The Proton donor role is filled by His265.

Belongs to the LpxC family. It depends on Zn(2+) as a cofactor.

It carries out the reaction a UDP-3-O-[(3R)-3-hydroxyacyl]-N-acetyl-alpha-D-glucosamine + H2O = a UDP-3-O-[(3R)-3-hydroxyacyl]-alpha-D-glucosamine + acetate. Its pathway is glycolipid biosynthesis; lipid IV(A) biosynthesis; lipid IV(A) from (3R)-3-hydroxytetradecanoyl-[acyl-carrier-protein] and UDP-N-acetyl-alpha-D-glucosamine: step 2/6. In terms of biological role, catalyzes the hydrolysis of UDP-3-O-myristoyl-N-acetylglucosamine to form UDP-3-O-myristoylglucosamine and acetate, the committed step in lipid A biosynthesis. The chain is UDP-3-O-acyl-N-acetylglucosamine deacetylase from Haemophilus influenzae (strain PittEE).